We begin with the raw amino-acid sequence, 466 residues long: Fumarate hydratase class II (466 aa).

Substrate contacts are provided by residues 100–102, arginine 128, 131–134, 141–143, and threonine 189; these read SGT, HPND, and STN. Residue histidine 190 is the Proton donor/acceptor of the active site. The active site involves serine 320. Residues serine 321 and 326–328 contribute to the substrate site; that span reads KVN.

It belongs to the class-II fumarase/aspartase family. Fumarase subfamily. Homotetramer.

It is found in the cytoplasm. The catalysed reaction is (S)-malate = fumarate + H2O. Its pathway is carbohydrate metabolism; tricarboxylic acid cycle; (S)-malate from fumarate: step 1/1. Functionally, involved in the TCA cycle. Catalyzes the stereospecific interconversion of fumarate to L-malate. This is Fumarate hydratase class II from Prochlorococcus marinus (strain MIT 9313).